Here is a 395-residue protein sequence, read N- to C-terminus: Acetate kinase (395 aa).

Asn8 contributes to the Mg(2+) binding site. Residue Lys15 coordinates ATP. Arg89 is a binding site for substrate. The active-site Proton donor/acceptor is Asp146. Residues 206–210 (HLGNG), 281–283 (DLR), and 329–333 (GIGEN) each bind ATP. A Mg(2+)-binding site is contributed by Glu382.

It belongs to the acetokinase family. In terms of assembly, homodimer. The cofactor is Mg(2+). It depends on Mn(2+) as a cofactor.

The protein localises to the cytoplasm. The enzyme catalyses acetate + ATP = acetyl phosphate + ADP. Its pathway is metabolic intermediate biosynthesis; acetyl-CoA biosynthesis; acetyl-CoA from acetate: step 1/2. In terms of biological role, catalyzes the formation of acetyl phosphate from acetate and ATP. Can also catalyze the reverse reaction. This Bacillus velezensis (strain DSM 23117 / BGSC 10A6 / LMG 26770 / FZB42) (Bacillus amyloliquefaciens subsp. plantarum) protein is Acetate kinase.